The sequence spans 110 residues: Protein NATD1 (110 aa).

The 91-residue stretch at 19 to 109 (EHDRKRRQFT…PLPQYLEHLQ (91 aa)) folds into the N-acetyltransferase domain.

This sequence belongs to the NATD1 family.

This is Protein NATD1 (NATD1) from Gallus gallus (Chicken).